Here is a 192-residue protein sequence, read N- to C-terminus: Crossover junction endodeoxyribonuclease RuvC (192 aa).

Active-site residues include Asp8, Glu67, and Asp139. The Mg(2+) site is built by Asp8, Glu67, and Asp139.

Belongs to the RuvC family. As to quaternary structure, homodimer which binds Holliday junction (HJ) DNA. The HJ becomes 2-fold symmetrical on binding to RuvC with unstacked arms; it has a different conformation from HJ DNA in complex with RuvA. In the full resolvosome a probable DNA-RuvA(4)-RuvB(12)-RuvC(2) complex forms which resolves the HJ. It depends on Mg(2+) as a cofactor.

It localises to the cytoplasm. The catalysed reaction is Endonucleolytic cleavage at a junction such as a reciprocal single-stranded crossover between two homologous DNA duplexes (Holliday junction).. Functionally, the RuvA-RuvB-RuvC complex processes Holliday junction (HJ) DNA during genetic recombination and DNA repair. Endonuclease that resolves HJ intermediates. Cleaves cruciform DNA by making single-stranded nicks across the HJ at symmetrical positions within the homologous arms, yielding a 5'-phosphate and a 3'-hydroxyl group; requires a central core of homology in the junction. The consensus cleavage sequence is 5'-(A/T)TT(C/G)-3'. Cleavage occurs on the 3'-side of the TT dinucleotide at the point of strand exchange. HJ branch migration catalyzed by RuvA-RuvB allows RuvC to scan DNA until it finds its consensus sequence, where it cleaves and resolves the cruciform DNA. The polypeptide is Crossover junction endodeoxyribonuclease RuvC (Haemophilus ducreyi (strain 35000HP / ATCC 700724)).